Here is a 555-residue protein sequence, read N- to C-terminus: Probable terpene synthase 6 (555 aa).

Residues aspartate 309, aspartate 313, and glutamate 460 each contribute to the Mg(2+) site. The short motif at 309 to 313 is the DDXXD motif element; the sequence is DDTYD.

It belongs to the terpene synthase family. Requires Mg(2+) as cofactor.

Probable sesquiterpene synthase. The protein is Probable terpene synthase 6 (TPS6) of Ricinus communis (Castor bean).